A 502-amino-acid chain; its full sequence is High affinity nitrate transporter 2.5 (502 aa).

12 helical membrane-spanning segments follow: residues 51 to 71, 87 to 107, 111 to 131, 133 to 153, 172 to 192, 208 to 228, 264 to 284, 300 to 320, 334 to 354, 361 to 381, 393 to 413, and 423 to 443; these read WFQFFCCFVSTFAAPPLLPVI, IASVSGAVFARIVMGTACDLF, LASAALTLSTAPAVYFTAGIK, PIGFIMVRFFAGFSLATFVST, IAAGWGNLGGGATQLIMPIVF, IAFFIPGLFQTLSAFAVLLFG, WITALAYGYCFGVELTIDNII, GIIAASFGLANFFARPGGGIF, LWAWWIVQTSGGVLCACLGQI, IIVMLVFSVFVQAACGLTFGV, VSGMTGAGGNVGAVLTQLIFF, and GITLMGVMSIACSLPICLIYF. The disordered stretch occupies residues 477 to 502; the sequence is LHIGSQKFAETSISERGRATTTHPQT.

Belongs to the major facilitator superfamily. Nitrate/nitrite porter (TC 2.A.1.8) family. Oligomeric molecular complex with NRT3.1. Expressed in roots, shoots and seeds. Expressed in leaves. Expressed in root hair zone of the primary root and the lateral roots, but not in the lateral root tip or in older parts of the roots. Detected mainly in the epidermis and the cortex. Expressed in shoots only in higher-order veins.

The protein localises to the cell membrane. In terms of biological role, nitrate transporter involved in the constitutive high-affinity transport system (cHATS) under long-term N starvation conditions. Predominantly expressed in roots of nitrate-deprived plants as a 150 kDa molecular complex with NRT3.1 representing the major contributor to cHATS influx. The principal role of this cHATS is to enable roots previously deprived of nitrate to absorb this ion and initiate induction of nitrate-inducible genes. Not involved in transfer of nitrate from roots to shoots. Contributes to phloem loading of nitrate in shoots during N starvation, but not required for growth and nitrate uptake in young plants. Required for the nitrate uptake-independent plant growth promotion and lateral root response to the rhizospheric Phyllobacterium. Might be involved in the transfer of nitrate from stored pools to cytoplasm. The protein is High affinity nitrate transporter 2.5 (NRT2.5) of Arabidopsis thaliana (Mouse-ear cress).